A 482-amino-acid polypeptide reads, in one-letter code: Vanillin dehydrogenase (482 aa).

NAD(+) is bound at residue 228–233 (GSTHVG). Residues E250 and C284 contribute to the active site.

It belongs to the aldehyde dehydrogenase family.

The catalysed reaction is vanillin + NAD(+) + H2O = vanillate + NADH + 2 H(+). Its function is as follows. Catalyzes the NAD-dependent oxidation of vanillin to vanillic acid. The sequence is that of Vanillin dehydrogenase (vdh) from Pseudomonas fluorescens.